We begin with the raw amino-acid sequence, 92 residues long: Cell division protein FtsL (92 aa).

The Cytoplasmic segment spans residues 1–3 (MGR). A helical membrane pass occupies residues 4-21 (ISLIVAALLMLSAISLVT). Over 22 to 92 (SRYQSRQLFI…YMNQPAGGAQ (71 aa)) the chain is Periplasmic.

The protein belongs to the FtsL family. Part of a complex composed of FtsB, FtsL and FtsQ.

It is found in the cell inner membrane. Essential cell division protein. May link together the upstream cell division proteins, which are predominantly cytoplasmic, with the downstream cell division proteins, which are predominantly periplasmic. This chain is Cell division protein FtsL, found in Bordetella pertussis (strain Tohama I / ATCC BAA-589 / NCTC 13251).